The sequence spans 619 residues: Chaperone protein HscA homolog (619 aa).

It belongs to the heat shock protein 70 family.

Its function is as follows. Chaperone involved in the maturation of iron-sulfur cluster-containing proteins. Has a low intrinsic ATPase activity which is markedly stimulated by HscB. The protein is Chaperone protein HscA homolog of Acinetobacter baumannii (strain AB0057).